The chain runs to 288 residues: MKKIAIFGSRHKSEQGASIKALILKLEEAGTPLYIERKFLSFLEQDLDFHPAICGVIDTLPEHIDYVICMGGDGTFLRTAHQIGVSQIPVLGVNTGRLGFLTDVDCHEASELITRLLDGDFTIETRSLLEVTEDNGSSPSYALNEAAILKRETGSMIRVNACLNDDYLAAYDADGLVVATPSGSTAYSLSGNGPIIMPACRNFVLTPIAPHSLNMRPLVVPDDTAIRLEVDSRSRNYLLVLDGRTRTLPCDTSILLKRAPHTLRMIRLRPHSFAETLRRKLMWGAAVR.

The active-site Proton acceptor is aspartate 73. NAD(+) is bound by residues aspartate 73 to glycine 74, arginine 78, asparagine 144 to glutamate 145, aspartate 174, threonine 185 to serine 190, and alanine 209.

Belongs to the NAD kinase family. A divalent metal cation serves as cofactor.

The protein resides in the cytoplasm. It carries out the reaction NAD(+) + ATP = ADP + NADP(+) + H(+). Involved in the regulation of the intracellular balance of NAD and NADP, and is a key enzyme in the biosynthesis of NADP. Catalyzes specifically the phosphorylation on 2'-hydroxyl of the adenosine moiety of NAD to yield NADP. In Porphyromonas gingivalis (strain ATCC 33277 / DSM 20709 / CIP 103683 / JCM 12257 / NCTC 11834 / 2561), this protein is NAD kinase.